Consider the following 242-residue polypeptide: Glutamate transport ATP-binding protein GluA (242 aa).

One can recognise an ABC transporter domain in the interval 2–236 (IKMTGVQKYF…PKSDRAKDFL (235 aa)). 34 to 41 (GPSGSGKS) is a binding site for ATP.

The protein belongs to the ABC transporter superfamily. As to quaternary structure, the complex is composed of two ATP-binding proteins (GluA), two transmembrane proteins (GluC and GluD) and a solute-binding protein (GluB).

Its subcellular location is the cell membrane. The catalysed reaction is a polar amino acid(out) + ATP + H2O = a polar amino acid(in) + ADP + phosphate + H(+). The enzyme catalyses L-glutamate(out) + ATP + H2O = L-glutamate(in) + ADP + phosphate + H(+). In terms of biological role, part of the ABC transporter complex GluABCD involved in glutamate uptake. Probably responsible for energy coupling to the transport system. This chain is Glutamate transport ATP-binding protein GluA, found in Corynebacterium glutamicum (strain ATCC 13032 / DSM 20300 / JCM 1318 / BCRC 11384 / CCUG 27702 / LMG 3730 / NBRC 12168 / NCIMB 10025 / NRRL B-2784 / 534).